We begin with the raw amino-acid sequence, 552 residues long: Tyrosine-protein kinase Src64B (552 aa).

Residues 95–156 form the SH3 domain; sequence VLKRVVVALY…PLNFVAEERS (62 aa). The SH2 domain maps to 162 to 259; it reads WFFENVLRKE…GLCHILSRPC (98 aa). Positions 284 to 537 constitute a Protein kinase domain; it reads IQLLRKLGRG…TFEFLNHYFE (254 aa). ATP contacts are provided by residues 290–298 and Lys-312; that span reads LGRGNFGEV. Residue Asp-404 is the Proton acceptor of the active site. Position 434 is a phosphotyrosine; by autocatalysis (Tyr-434).

This sequence belongs to the protein kinase superfamily. Tyr protein kinase family. SRC subfamily. As to quaternary structure, interacts with hzg. Phosphorylated. As to expression, after the first 8 hours of development, accumulates almost exclusively in neural tissues such as the brain, ventral nerve chord, and eye-antennal disks, and in differentiating smooth muscle.

The catalysed reaction is L-tyrosyl-[protein] + ATP = O-phospho-L-tyrosyl-[protein] + ADP + H(+). Tyrosine-protein kinase that may play a role in the development of neural tissue and smooth muscle. May contribute to tyrosine phosphorylation of Dscam1, a cell surface receptor involved in targeting of growing axons during eye morphogenesis. This Drosophila melanogaster (Fruit fly) protein is Tyrosine-protein kinase Src64B (Src64B).